Reading from the N-terminus, the 118-residue chain is NADH-quinone oxidoreductase subunit A (118 aa).

The next 3 membrane-spanning stretches (helical) occupy residues 5-25, 61-81, and 90-110; these read YLGI…AFAV, FLYA…YPWA, and FAIV…WYAW.

Belongs to the complex I subunit 3 family. In terms of assembly, NDH-1 is composed of 14 different subunits. Subunits NuoA, H, J, K, L, M, N constitute the membrane sector of the complex.

The protein resides in the cell membrane. It carries out the reaction a quinone + NADH + 5 H(+)(in) = a quinol + NAD(+) + 4 H(+)(out). In terms of biological role, NDH-1 shuttles electrons from NADH, via FMN and iron-sulfur (Fe-S) centers, to quinones in the respiratory chain. The immediate electron acceptor for the enzyme in this species is believed to be a menaquinone. Couples the redox reaction to proton translocation (for every two electrons transferred, four hydrogen ions are translocated across the cytoplasmic membrane), and thus conserves the redox energy in a proton gradient. This Heliobacterium modesticaldum (strain ATCC 51547 / Ice1) protein is NADH-quinone oxidoreductase subunit A.